A 138-amino-acid polypeptide reads, in one-letter code: Chorion protein S16 (138 aa).

The signal sequence occupies residues 1 to 20 (MSATLRLLCLMACCVALAVA).

Belongs to the chorion protein S16 family.

The protein resides in the secreted. In terms of biological role, chorion membrane (egg shell) protein; plays a role in protecting the egg from the environment. This chain is Chorion protein S16 (Cp16), found in Drosophila melanogaster (Fruit fly).